The sequence spans 423 residues: MDTVSRQLFEKAQAVIPGGVNSPVRACHNVDSQPLFIAEAHGCHLTDVDGRQYIDFVLSWGPMILGHDEPSVTRAVCDAAHRGTSYGAPCPDEVLLAEAVVAAMPSLEMVRMVNSGTEATMSALRLARAATRRDKVLKFVGCYHGHADPFLAAAGSGLATFSIPGTPGVPAAVVADTLLAPYNDLEAVKECFARHGESIAAIIVEPVAANMGLVLPKPGFLEGLRAICDQYESLLIFDEVITGFRAAFGGAQARFKVDPDLTTFGKIIGGGLPVGAFGGKRRYMELIAPRGGVYQAGTLSGNPLAMAAGLATLGILRKADYDGLENRTRAFAYSMRDIIAAKGVPLQMPTLASMFCPYFSEHEVTDFADAQKCDQKLFTSFYKQMRAQGIYLAPSGYETGMVSFAHTDEDFNRALDAARKVMF.

At Lys266 the chain carries N6-(pyridoxal phosphate)lysine.

Belongs to the class-III pyridoxal-phosphate-dependent aminotransferase family. HemL subfamily. Homodimer. Pyridoxal 5'-phosphate is required as a cofactor.

The protein resides in the cytoplasm. It catalyses the reaction (S)-4-amino-5-oxopentanoate = 5-aminolevulinate. Its pathway is porphyrin-containing compound metabolism; protoporphyrin-IX biosynthesis; 5-aminolevulinate from L-glutamyl-tRNA(Glu): step 2/2. This Desulfovibrio desulfuricans (strain ATCC 27774 / DSM 6949 / MB) protein is Glutamate-1-semialdehyde 2,1-aminomutase.